Consider the following 667-residue polypeptide: Probable E3 ubiquitin-protein ligase HIP1 (667 aa).

Disordered regions lie at residues 142–163 and 285–311; these read NGAS…NGQA and TTAG…RSFR. Residues 288 to 309 show a composition bias toward low complexity; sequence GLSSSSYDPSGGNNNSGGSQRS. The RING-type; atypical zinc finger occupies 620 to 661; sequence CCICQEEYVDGDDLGTLDCGHDFHVGCVRQWLVVKNTCPICK.

This sequence belongs to the RING-type zinc finger family. As to quaternary structure, interacts with HAL3.

The catalysed reaction is S-ubiquitinyl-[E2 ubiquitin-conjugating enzyme]-L-cysteine + [acceptor protein]-L-lysine = [E2 ubiquitin-conjugating enzyme]-L-cysteine + N(6)-ubiquitinyl-[acceptor protein]-L-lysine.. The protein operates within protein modification; protein ubiquitination. In terms of biological role, probable E3 ubiquitin-protein ligase that functions downstream of HAL3 and is required for HAL3-regulated plant growth. Activation of HIP1 by HAL3 may lead to the degradation of cell cycle suppressors, resulting in enhancement of cell division and plant growth. The protein is Probable E3 ubiquitin-protein ligase HIP1 (HIP1) of Oryza sativa subsp. japonica (Rice).